The chain runs to 66 residues: Large ribosomal subunit protein uL29 (66 aa).

The protein belongs to the universal ribosomal protein uL29 family.

The sequence is that of Large ribosomal subunit protein uL29 from Geobacillus kaustophilus (strain HTA426).